The primary structure comprises 319 residues: Plastid lipid-associated protein 2, chloroplastic (319 aa).

A chloroplast-targeting transit peptide spans 1–59; that stretch reads MATVQFFNQFPCKTRVQSSANSKPLSKPPSSLVPMSALTRRPSFPPGEFAVSRSDFRVR. The interval 17-39 is disordered; sequence QSSANSKPLSKPPSSLVPMSALT. A compositionally biased stretch (low complexity) spans 18–36; sequence SSANSKPLSKPPSSLVPMS.

This sequence belongs to the PAP/fibrillin family. Expressed almost exclusively in petals. Very weak expression in all other organs.

Its subcellular location is the plastid. The protein localises to the chloroplast. In terms of biological role, may stabilize the accumulated carotenoid structures. This Brassica campestris (Field mustard) protein is Plastid lipid-associated protein 2, chloroplastic (PAP2).